A 399-amino-acid polypeptide reads, in one-letter code: Small ribosomal subunit protein uS3m (399 aa).

It belongs to the universal ribosomal protein uS3 family.

The protein resides in the mitochondrion. In terms of biological role, essential for mitochondrial protein synthesis and required for the maturation of small ribosomal subunits. The chain is Small ribosomal subunit protein uS3m from Penicillium urticae.